Consider the following 1113-residue polypeptide: Translation initiation factor IF-2 (1113 aa).

Polar residues-rich tracts occupy residues 56-72 (QSNQ…SSKE), 129-139 (KANTSNQSKGV), 162-187 (LENN…TQLV), and 194-205 (TKNNEPPQQKTS). 2 disordered regions span residues 56-446 (QSNQ…IGEN) and 470-504 (LARP…RQRR). Residues 248 to 265 (PVQPRTQNNQNRQRIPNK) show a composition bias toward low complexity. Residues 415–429 (RRSDWDDAAKLEALR) show a composition bias toward basic and acidic residues. Basic residues-rich tracts occupy residues 474–483 (AKPKSTKKSN) and 490–504 (TRKR…RQRR). The 173-residue stretch at 605 to 777 (RRPPVVTVMG…VLLVTEVEDL (173 aa)) folds into the tr-type G domain. Residues 614–621 (GHVDHGKT) are G1. A GTP-binding site is contributed by 614-621 (GHVDHGKT). The interval 639-643 (GITQH) is G2. A G3 region spans residues 664–667 (DTPG). GTP contacts are provided by residues 664-668 (DTPGH) and 718-721 (NKID). The tract at residues 718–721 (NKID) is G4. Residues 754-756 (SAI) form a G5 region.

Belongs to the TRAFAC class translation factor GTPase superfamily. Classic translation factor GTPase family. IF-2 subfamily.

Its subcellular location is the cytoplasm. One of the essential components for the initiation of protein synthesis. Protects formylmethionyl-tRNA from spontaneous hydrolysis and promotes its binding to the 30S ribosomal subunits. Also involved in the hydrolysis of GTP during the formation of the 70S ribosomal complex. The sequence is that of Translation initiation factor IF-2 from Prochlorococcus marinus (strain MIT 9211).